The sequence spans 164 residues: MSDHLSIALKRLDPDLPVPQRAHPGDAGVDLCSTSDVTIEPGHRTLVGTGIAIALPVGTVGLIHPRSGLAAKSGLSIVNAPGTVDAGYRGELKVCLINLDPATAIDIRRGDRIAQLVVQRVELPVFEEVESLDDTTRGTGGYGSSGGHAILDTDAPGAVVGEGV.

Substrate contacts are provided by residues 66–68, N79, 83–85, and K93; these read RSG and TVD.

This sequence belongs to the dUTPase family. Mg(2+) serves as cofactor.

It catalyses the reaction dUTP + H2O = dUMP + diphosphate + H(+). Its pathway is pyrimidine metabolism; dUMP biosynthesis; dUMP from dCTP (dUTP route): step 2/2. In terms of biological role, this enzyme is involved in nucleotide metabolism: it produces dUMP, the immediate precursor of thymidine nucleotides and it decreases the intracellular concentration of dUTP so that uracil cannot be incorporated into DNA. The sequence is that of Deoxyuridine 5'-triphosphate nucleotidohydrolase from Rhodococcus erythropolis (strain PR4 / NBRC 100887).